The following is a 494-amino-acid chain: ATP synthase subunit beta, plastid (494 aa).

An ATP-binding site is contributed by 169 to 176 (GGAGVGKT).

It belongs to the ATPase alpha/beta chains family. F-type ATPases have 2 components, CF(1) - the catalytic core - and CF(0) - the membrane proton channel. CF(1) has five subunits: alpha(3), beta(3), gamma(1), delta(1), epsilon(1). CF(0) has four main subunits: a(1), b(1), b'(1) and c(9-12).

The protein localises to the plastid thylakoid membrane. The catalysed reaction is ATP + H2O + 4 H(+)(in) = ADP + phosphate + 5 H(+)(out). Produces ATP from ADP in the presence of a proton gradient across the membrane. The catalytic sites are hosted primarily by the beta subunits. This Cuscuta gronovii (Common dodder) protein is ATP synthase subunit beta, plastid (atpB).